Here is a 450-residue protein sequence, read N- to C-terminus: Tol-Pal system protein TolB (450 aa).

The signal sequence occupies residues Met1–Gly37.

Belongs to the TolB family. As to quaternary structure, the Tol-Pal system is composed of five core proteins: the inner membrane proteins TolA, TolQ and TolR, the periplasmic protein TolB and the outer membrane protein Pal. They form a network linking the inner and outer membranes and the peptidoglycan layer.

It localises to the periplasm. Part of the Tol-Pal system, which plays a role in outer membrane invagination during cell division and is important for maintaining outer membrane integrity. In Nitrobacter winogradskyi (strain ATCC 25391 / DSM 10237 / CIP 104748 / NCIMB 11846 / Nb-255), this protein is Tol-Pal system protein TolB.